Reading from the N-terminus, the 196-residue chain is Mediator of RNA polymerase II transcription subunit 21 (196 aa).

The interval 52–111 (KIPKNASTPPVPASAPQAAQSQSQASPPPPDTANPQTGGQHADQQQQSPDGEGLPAPDSP) is disordered. Composition is skewed to low complexity over residues 65–76 (SAPQAAQSQSQA) and 87–98 (QTGGQHADQQQQ). The stretch at 144-174 (SSEAEQERRIRELEGELRIVEGVREERRREL) forms a coiled coil.

This sequence belongs to the Mediator complex subunit 21 family. Component of the Mediator complex.

The protein localises to the nucleus. In terms of biological role, component of the Mediator complex, a coactivator involved in the regulated transcription of nearly all RNA polymerase II-dependent genes. Mediator functions as a bridge to convey information from gene-specific regulatory proteins to the basal RNA polymerase II transcription machinery. Mediator is recruited to promoters by direct interactions with regulatory proteins and serves as a scaffold for the assembly of a functional preinitiation complex with RNA polymerase II and the general transcription factors. The sequence is that of Mediator of RNA polymerase II transcription subunit 21 (srb7) from Aspergillus niger (strain ATCC MYA-4892 / CBS 513.88 / FGSC A1513).